The primary structure comprises 270 residues: Diaminopimelate epimerase (270 aa).

Residues Asn-15, Gln-49, and Asn-66 each coordinate substrate. Cys-75 functions as the Proton donor in the catalytic mechanism. Residues 76–77 (GN), Asn-155, Asn-187, and 204–205 (ER) contribute to the substrate site. Catalysis depends on Cys-213, which acts as the Proton acceptor. 214–215 (GS) contacts substrate.

The protein belongs to the diaminopimelate epimerase family. In terms of assembly, homodimer.

The protein resides in the cytoplasm. The catalysed reaction is (2S,6S)-2,6-diaminopimelate = meso-2,6-diaminopimelate. It functions in the pathway amino-acid biosynthesis; L-lysine biosynthesis via DAP pathway; DL-2,6-diaminopimelate from LL-2,6-diaminopimelate: step 1/1. Functionally, catalyzes the stereoinversion of LL-2,6-diaminopimelate (L,L-DAP) to meso-diaminopimelate (meso-DAP), a precursor of L-lysine and an essential component of the bacterial peptidoglycan. The polypeptide is Diaminopimelate epimerase (Rickettsia africae (strain ESF-5)).